Reading from the N-terminus, the 484-residue chain is Protein nucleotidyltransferase YdiU (484 aa).

Residues glycine 81, glycine 83, arginine 84, lysine 103, aspartate 115, glycine 116, arginine 166, and arginine 173 each contribute to the ATP site. Catalysis depends on aspartate 244, which acts as the Proton acceptor. Mg(2+) contacts are provided by asparagine 245 and aspartate 254. Aspartate 254 is an ATP binding site.

It belongs to the SELO family. The cofactor is Mg(2+). Requires Mn(2+) as cofactor.

The enzyme catalyses L-seryl-[protein] + ATP = 3-O-(5'-adenylyl)-L-seryl-[protein] + diphosphate. It catalyses the reaction L-threonyl-[protein] + ATP = 3-O-(5'-adenylyl)-L-threonyl-[protein] + diphosphate. The catalysed reaction is L-tyrosyl-[protein] + ATP = O-(5'-adenylyl)-L-tyrosyl-[protein] + diphosphate. It carries out the reaction L-histidyl-[protein] + UTP = N(tele)-(5'-uridylyl)-L-histidyl-[protein] + diphosphate. The enzyme catalyses L-seryl-[protein] + UTP = O-(5'-uridylyl)-L-seryl-[protein] + diphosphate. It catalyses the reaction L-tyrosyl-[protein] + UTP = O-(5'-uridylyl)-L-tyrosyl-[protein] + diphosphate. Its function is as follows. Nucleotidyltransferase involved in the post-translational modification of proteins. It can catalyze the addition of adenosine monophosphate (AMP) or uridine monophosphate (UMP) to a protein, resulting in modifications known as AMPylation and UMPylation. The chain is Protein nucleotidyltransferase YdiU from Shewanella oneidensis (strain ATCC 700550 / JCM 31522 / CIP 106686 / LMG 19005 / NCIMB 14063 / MR-1).